A 488-amino-acid chain; its full sequence is MAASATATVGTKGVVRQVIGPVLDVEFPAGKLPSILNALRIEGKNPAGQDVALTAEVQQLLGDHRVRAVAMSGTDGLVRGMEALDTGAPISVPVGEATLGRIFNVLGEPVDEQGDLKNVTTSPIHRSAPSLTDLETKPKVFETGIKVIDLLAPYRQGGKVGLFGGAGVGKTVLIQELINNIAKEHGGVSVFGGVGERTREGNDLYEEFKESGVINSEDLTKSKLALCFGQMNEPPGARMRVGLSALTMAEHFRDVNKQDVLLFIDNIFRFVQAGSEVSALLGRMPSAVGYQPTLGTDVGELQERITSTLEGSITSIQAVYVPADDLTDPAPATTFAHLDATTVLARALAAKGIYPAVDPLDSTSTMLQPSVVGDEHYRTARAVQSTLQRYKELQDIIAILGLDELSEEDRKTVDRARKIEKFLSQPFFVAEIFTGMSGKYVKLEDTIKGFNMILSGELDQLPEQAFYLVGSIDEVKAKAEKIASEAKA.

An ATP-binding site is contributed by 164–171; it reads GGAGVGKT.

It belongs to the ATPase alpha/beta chains family. In terms of assembly, F-type ATPases have 2 components, CF(1) - the catalytic core - and CF(0) - the membrane proton channel. CF(1) has five subunits: alpha(3), beta(3), gamma(1), delta(1), epsilon(1). CF(0) has four main subunits: a(1), b(1), b'(1) and c(9-12).

It localises to the cellular thylakoid membrane. The catalysed reaction is ATP + H2O + 4 H(+)(in) = ADP + phosphate + 5 H(+)(out). Its function is as follows. Produces ATP from ADP in the presence of a proton gradient across the membrane. The catalytic sites are hosted primarily by the beta subunits. The protein is ATP synthase subunit beta of Prochlorococcus marinus (strain NATL2A).